Consider the following 305-residue polypeptide: UDP-3-O-acyl-N-acetylglucosamine deacetylase (305 aa).

Zn(2+) contacts are provided by H79, H238, and D242. Catalysis depends on H265, which acts as the Proton donor.

The protein belongs to the LpxC family. Zn(2+) serves as cofactor.

It carries out the reaction a UDP-3-O-[(3R)-3-hydroxyacyl]-N-acetyl-alpha-D-glucosamine + H2O = a UDP-3-O-[(3R)-3-hydroxyacyl]-alpha-D-glucosamine + acetate. Its pathway is glycolipid biosynthesis; lipid IV(A) biosynthesis; lipid IV(A) from (3R)-3-hydroxytetradecanoyl-[acyl-carrier-protein] and UDP-N-acetyl-alpha-D-glucosamine: step 2/6. Functionally, catalyzes the hydrolysis of UDP-3-O-myristoyl-N-acetylglucosamine to form UDP-3-O-myristoylglucosamine and acetate, the committed step in lipid A biosynthesis. In Colwellia psychrerythraea (strain 34H / ATCC BAA-681) (Vibrio psychroerythus), this protein is UDP-3-O-acyl-N-acetylglucosamine deacetylase.